A 217-amino-acid chain; its full sequence is ATP synthase F(0) complex subunit a (217 aa).

6 helical membrane-spanning segments follow: residues 20 to 40, 70 to 90, 100 to 120, 126 to 146, 166 to 188, and 193 to 215; these read MNWI…WILP, PAFL…FSLF, MVFS…LSTC, MIAH…MTII, LIAG…IIFI, and MIFE…SLYS.

Belongs to the ATPase A chain family. As to quaternary structure, component of the ATP synthase complex composed at least of ATP5F1A/subunit alpha, ATP5F1B/subunit beta, ATP5MC1/subunit c (homooctomer), MT-ATP6/subunit a, MT-ATP8/subunit 8, ATP5ME/subunit e, ATP5MF/subunit f, ATP5MG/subunit g, ATP5MK/subunit k, ATP5MJ/subunit j, ATP5F1C/subunit gamma, ATP5F1D/subunit delta, ATP5F1E/subunit epsilon, ATP5PF/subunit F6, ATP5PB/subunit b, ATP5PD/subunit d, ATP5PO/subunit OSCP. ATP synthase complex consists of a soluble F(1) head domain (subunits alpha(3) and beta(3)) - the catalytic core - and a membrane F(0) domain - the membrane proton channel (subunits c, a, 8, e, f, g, k and j). These two domains are linked by a central stalk (subunits gamma, delta, and epsilon) rotating inside the F1 region and a stationary peripheral stalk (subunits F6, b, d, and OSCP). Interacts with DNAJC30; interaction is direct.

The protein resides in the mitochondrion inner membrane. The catalysed reaction is H(+)(in) = H(+)(out). Subunit a, of the mitochondrial membrane ATP synthase complex (F(1)F(0) ATP synthase or Complex V) that produces ATP from ADP in the presence of a proton gradient across the membrane which is generated by electron transport complexes of the respiratory chain. ATP synthase complex consist of a soluble F(1) head domain - the catalytic core - and a membrane F(1) domain - the membrane proton channel. These two domains are linked by a central stalk rotating inside the F(1) region and a stationary peripheral stalk. During catalysis, ATP synthesis in the catalytic domain of F(1) is coupled via a rotary mechanism of the central stalk subunits to proton translocation. With the subunit c (ATP5MC1), forms the proton-conducting channel in the F(0) domain, that contains two crucial half-channels (inlet and outlet) that facilitate proton movement from the mitochondrial intermembrane space (IMS) into the matrix. Protons are taken up via the inlet half-channel and released through the outlet half-channel, following a Grotthuss mechanism. The polypeptide is ATP synthase F(0) complex subunit a (Rhopalosiphum padi (Bird cherry-oat aphid)).